The chain runs to 447 residues: GTPase Der (447 aa).

EngA-type G domains follow at residues Lys4–Glu165 and Leu180–Asn357. GTP is bound by residues Gly10 to Ser17, Asp57 to Leu61, Asn119 to Glu122, Gly186 to Ser193, Asp233 to Leu237, and Asn298 to Asp301. The region spanning Lys358 to Lys443 is the KH-like domain.

This sequence belongs to the TRAFAC class TrmE-Era-EngA-EngB-Septin-like GTPase superfamily. EngA (Der) GTPase family. As to quaternary structure, associates with the 50S ribosomal subunit.

GTPase that plays an essential role in the late steps of ribosome biogenesis. This chain is GTPase Der, found in Rickettsia prowazekii (strain Madrid E).